Consider the following 283-residue polypeptide: Galactooligosaccharides transport system permease protein GanQ (283 aa).

6 helical membrane-spanning segments follow: residues 13 to 33, 82 to 102, 115 to 135, 137 to 157, 188 to 208, and 248 to 268; these read LLFS…PLLW, ISLF…YAFS, LFLL…FVLA, ILGM…GLIP, IFFQ…AMNG, and TTFA…FIML. Positions 76–268 constitute an ABC transmembrane type-1 domain; that stretch reads YVNSMKISLF…IPVAVIFIML (193 aa).

Belongs to the binding-protein-dependent transport system permease family. In terms of assembly, the complex is composed of two ATP-binding proteins (MsmX), two transmembrane proteins (GanP and GanQ) and a solute-binding protein (GanS).

It is found in the cell membrane. Functionally, involved in galactan degradation. Part of the ABC transporter complex GanPQS involved in the uptake of galactooligosaccharides. Responsible for the translocation of the substrate across the membrane. The protein is Galactooligosaccharides transport system permease protein GanQ (ganQ) of Bacillus subtilis (strain 168).